The primary structure comprises 174 residues: Flavodoxin (174 aa).

In terms of domain architecture, Flavodoxin-like spans 4–166; it reads IGIFFGSDTG…RIIQWTKKIK (163 aa).

This sequence belongs to the flavodoxin family. The cofactor is FMN.

In terms of biological role, low-potential electron donor to a number of redox enzymes. This Buchnera aphidicola subsp. Baizongia pistaciae (strain Bp) protein is Flavodoxin (fldA).